We begin with the raw amino-acid sequence, 247 residues long: Mitochondrial inner membrane protease ATP23 (247 aa).

Positions 1–21 (MSVPPPPKEDLIKPNPPKSES) are disordered. His-144 contacts a divalent metal cation. The active site involves Glu-145. His-148 contacts a divalent metal cation.

The protein belongs to the peptidase M76 family.

It localises to the mitochondrion inner membrane. Its function is as follows. Has a dual role in the assembly of mitochondrial ATPase. Acts as a protease that removes N-terminal residues of mitochondrial ATPase CF(0) subunit 6 at the intermembrane space side. Also involved in the correct assembly of the membrane-embedded ATPase CF(0) particle, probably mediating association of subunit 6 with the subunit 9 ring. This is Mitochondrial inner membrane protease ATP23 (ATP23) from Kluyveromyces lactis (strain ATCC 8585 / CBS 2359 / DSM 70799 / NBRC 1267 / NRRL Y-1140 / WM37) (Yeast).